The chain runs to 855 residues: Alanine--tRNA ligase (855 aa).

Zn(2+) contacts are provided by histidine 555, histidine 559, cysteine 657, and histidine 661.

Belongs to the class-II aminoacyl-tRNA synthetase family. Zn(2+) is required as a cofactor.

Its subcellular location is the cytoplasm. The enzyme catalyses tRNA(Ala) + L-alanine + ATP = L-alanyl-tRNA(Ala) + AMP + diphosphate. Functionally, catalyzes the attachment of alanine to tRNA(Ala) in a two-step reaction: alanine is first activated by ATP to form Ala-AMP and then transferred to the acceptor end of tRNA(Ala). Also edits incorrectly charged Ser-tRNA(Ala) and Gly-tRNA(Ala) via its editing domain. The sequence is that of Alanine--tRNA ligase from Wolinella succinogenes (strain ATCC 29543 / DSM 1740 / CCUG 13145 / JCM 31913 / LMG 7466 / NCTC 11488 / FDC 602W) (Vibrio succinogenes).